Consider the following 472-residue polypeptide: Serralysin A (472 aa).

Residues 1-17 (MEKNLSSRDDDALHSLS) constitute a propeptide that is removed on maturation. Zn(2+) is bound at residue H186. E187 is a catalytic residue. Positions 190 and 221 each coordinate Zn(2+). Ca(2+) is bound by residues R258, G260, T262, D290, G292, G293, T332, E334, G339, G341, D343, N348, A350, N352, G356, G357, A358, G359, D361, G365, G366, G367, G368, D370, G374, G375, G377, D379, D388, D395, and D405. Hemolysin-type calcium-binding repeat units follow at residues 337-354 (IGGS…DNIL) and 355-372 (RGGA…ADRL).

This sequence belongs to the peptidase M10B family. It depends on Ca(2+) as a cofactor. Requires Zn(2+) as cofactor.

It is found in the secreted. It carries out the reaction Preferential cleavage of bonds with hydrophobic residues in P1'.. This Dickeya chrysanthemi (Pectobacterium chrysanthemi) protein is Serralysin A (prtA).